Reading from the N-terminus, the 245-residue chain is tRNA1(Val) (adenine(37)-N6)-methyltransferase (245 aa).

It belongs to the methyltransferase superfamily. tRNA (adenine-N(6)-)-methyltransferase family.

It is found in the cytoplasm. It catalyses the reaction adenosine(37) in tRNA1(Val) + S-adenosyl-L-methionine = N(6)-methyladenosine(37) in tRNA1(Val) + S-adenosyl-L-homocysteine + H(+). Specifically methylates the adenine in position 37 of tRNA(1)(Val) (anticodon cmo5UAC). This is tRNA1(Val) (adenine(37)-N6)-methyltransferase from Salmonella paratyphi A (strain ATCC 9150 / SARB42).